We begin with the raw amino-acid sequence, 496 residues long: Transmembrane transporter swnT (496 aa).

The next 5 membrane-spanning stretches (helical) occupy residues leucine 40–leucine 60, valine 72–glutamate 92, alanine 124–leucine 144, tryptophan 162–glutamate 182, and alanine 191–alanine 211. Asparagine 225 is a glycosylation site (N-linked (GlcNAc...) asparagine). Transmembrane regions (helical) follow at residues leucine 270 to valine 290, alanine 314 to isoleucine 334, proline 368 to alanine 388, leucine 396 to leucine 416, glycine 434 to phenylalanine 454, and tyrosine 467 to alanine 487.

It belongs to the amino acid-polyamine-organocation (APC) superfamily. Amino acid/choline transporter (ACT) (TC 2.A.3.4) family.

The protein localises to the membrane. In terms of biological role, transmembrane transporter; part of the gene cluster that mediates the biosynthesis of swainsonine, a cytotoxic fungal alkaloid and a potential cancer therapy drug. Does not mediate the secretion of SW and the exact role of swnT in SW biosynthesis remains to be determined. The polypeptide is Transmembrane transporter swnT (Metarhizium robertsii (strain ARSEF 23 / ATCC MYA-3075) (Metarhizium anisopliae (strain ARSEF 23))).